The chain runs to 375 residues: DNA replication and repair protein RecF (375 aa).

30-37 serves as a coordination point for ATP; the sequence is GDNAQGKT.

This sequence belongs to the RecF family.

It localises to the cytoplasm. The RecF protein is involved in DNA metabolism; it is required for DNA replication and normal SOS inducibility. RecF binds preferentially to single-stranded, linear DNA. It also seems to bind ATP. This Symbiobacterium thermophilum (strain DSM 24528 / JCM 14929 / IAM 14863 / T) protein is DNA replication and repair protein RecF.